The sequence spans 369 residues: Glutamate 5-kinase (369 aa).

ATP is bound at residue Lys10. Substrate-binding residues include Ser50, Asp137, and Asn149. Residues 169-170 and 210-216 each bind ATP; these read TD and TGGMVTK. The 74-residue stretch at 276–349 folds into the PUA domain; that stretch reads EGSIFIDEGA…GKHSEEMLAT (74 aa).

The protein belongs to the glutamate 5-kinase family.

It localises to the cytoplasm. The enzyme catalyses L-glutamate + ATP = L-glutamyl 5-phosphate + ADP. It functions in the pathway amino-acid biosynthesis; L-proline biosynthesis; L-glutamate 5-semialdehyde from L-glutamate: step 1/2. Its function is as follows. Catalyzes the transfer of a phosphate group to glutamate to form L-glutamate 5-phosphate. The chain is Glutamate 5-kinase from Desulfitobacterium hafniense (strain Y51).